The primary structure comprises 148 residues: Large ribosomal subunit protein uL15 (148 aa).

The segment at 1–51 (MNLSSLKPAEGAVKSRKRIGRGPGSGLGGTSTRGHKGAKSRSGYSKKIGFE) is disordered. Residues 21–31 (RGPGSGLGGTS) are compositionally biased toward gly residues.

This sequence belongs to the universal ribosomal protein uL15 family. In terms of assembly, part of the 50S ribosomal subunit.

Functionally, binds to the 23S rRNA. The sequence is that of Large ribosomal subunit protein uL15 from Porphyromonas gingivalis (strain ATCC 33277 / DSM 20709 / CIP 103683 / JCM 12257 / NCTC 11834 / 2561).